A 458-amino-acid chain; its full sequence is Chromosomal replication initiator protein DnaA (458 aa).

The interval 1–79 (MSLAIWQECL…ENPNHSVKIR (79 aa)) is domain I, interacts with DnaA modulators. The tract at residues 79–120 (RLMVGNVSSVEKKPAKQIPTQAPLTNQPWEGESKAHRVPHKS) is domain II. Residues 92–114 (PAKQIPTQAPLTNQPWEGESKAH) are disordered. Polar residues predominate over residues 96-106 (IPTQAPLTNQP). Residues 121–338 (NLIKKYTFDN…GAIANISAKA (218 aa)) form a domain III, AAA+ region region. Positions 165, 167, 168, and 169 each coordinate ATP. A domain IV, binds dsDNA region spans residues 339–458 (QFTGQGITIS…YKILIRTLSM (120 aa)).

This sequence belongs to the DnaA family. In terms of assembly, oligomerizes as a right-handed, spiral filament on DNA at oriC.

It localises to the cytoplasm. Plays an essential role in the initiation and regulation of chromosomal replication. ATP-DnaA binds to the origin of replication (oriC) to initiate formation of the DNA replication initiation complex once per cell cycle. Binds the DnaA box (a 9 base pair repeat at the origin) and separates the double-stranded (ds)DNA. Forms a right-handed helical filament on oriC DNA; dsDNA binds to the exterior of the filament while single-stranded (ss)DNA is stabiized in the filament's interior. The ATP-DnaA-oriC complex binds and stabilizes one strand of the AT-rich DNA unwinding element (DUE), permitting loading of DNA polymerase. After initiation quickly degrades to an ADP-DnaA complex that is not apt for DNA replication. Binds acidic phospholipids. The polypeptide is Chromosomal replication initiator protein DnaA (Psychromonas ingrahamii (strain DSM 17664 / CCUG 51855 / 37)).